A 537-amino-acid chain; its full sequence is Putative cysteine ligase BshC (537 aa).

The stretch at 422–450 (IEKVEGMIEQQRRLNQDLLDEVAGNQNNI) forms a coiled coil.

Belongs to the BshC family.

In terms of biological role, involved in bacillithiol (BSH) biosynthesis. May catalyze the last step of the pathway, the addition of cysteine to glucosamine malate (GlcN-Mal) to generate BSH. The polypeptide is Putative cysteine ligase BshC (Staphylococcus aureus (strain bovine RF122 / ET3-1)).